Reading from the N-terminus, the 456-residue chain is Nuclear distribution protein PAC1 (456 aa).

The region spanning 9–41 (QADELHKSIIAYLSANDLPNTAAALRAELNLTE) is the LisH domain. A coiled-coil region spans residues 61-88 (TSIVRLQKKIMDLEARNAALQSELDNLT). 8 WD repeats span residues 114–153 (SHRD…LEMT), 156–197 (GHTR…KNVR), 201–240 (GHDH…CVRS), 243–282 (GHTG…NPEN), 288–348 (GHEH…LMTL), 350–389 (GHDN…KCVK), 394–437 (AHDR…PDVQ), and 439–456 (RCVI…IFAA).

Belongs to the WD repeat LIS1/nudF family. Self-associates. Interacts with NDL1 and dynein.

The protein resides in the cytoplasm. The protein localises to the cytoskeleton. Its subcellular location is the spindle pole. Positively regulates the activity of the minus-end directed microtubule motor protein dynein. May enhance dynein-mediated microtubule sliding by targeting dynein to the microtubule plus end. Required for nuclear migration during vegetative growth as well as development. Required for retrograde early endosome (EE) transport from the hyphal tip. Required for localization of dynein to the mitotic spindle poles. Recruits additional proteins to the dynein complex at SPBs. The chain is Nuclear distribution protein PAC1 from Ajellomyces capsulatus (strain H143) (Darling's disease fungus).